The chain runs to 193 residues: Phosphoheptose isomerase (193 aa).

One can recognise an SIS domain in the interval 37-193 (LADSFKAGGK…MLIEKEMAKG (157 aa)). 52–54 (NGG) contributes to the substrate binding site. Positions 61 and 65 each coordinate Zn(2+). Residues Glu65, 93–94 (ND), 119–121 (STS), Ser124, and Gln172 contribute to the substrate site. Gln172 and His180 together coordinate Zn(2+).

Belongs to the SIS family. GmhA subfamily. As to quaternary structure, homotetramer. It depends on Zn(2+) as a cofactor.

It localises to the cytoplasm. The catalysed reaction is 2 D-sedoheptulose 7-phosphate = D-glycero-alpha-D-manno-heptose 7-phosphate + D-glycero-beta-D-manno-heptose 7-phosphate. Its pathway is carbohydrate biosynthesis; D-glycero-D-manno-heptose 7-phosphate biosynthesis; D-glycero-alpha-D-manno-heptose 7-phosphate and D-glycero-beta-D-manno-heptose 7-phosphate from sedoheptulose 7-phosphate: step 1/1. Its function is as follows. Catalyzes the isomerization of sedoheptulose 7-phosphate in D-glycero-D-manno-heptose 7-phosphate. The protein is Phosphoheptose isomerase of Klebsiella pneumoniae subsp. pneumoniae (strain ATCC 700721 / MGH 78578).